Reading from the N-terminus, the 431-residue chain is Signal recognition particle 54 kDa protein (431 aa).

Residues 105-112, 185-189, and 243-246 each bind GTP; these read GVEGSGKT, DTAGR, and TKMD.

The protein belongs to the GTP-binding SRP family. SRP54 subfamily. As to quaternary structure, part of the signal recognition particle protein translocation system, which is composed of SRP and FtsY. Archaeal SRP consists of a 7S RNA molecule of 300 nucleotides and two protein subunits: SRP54 and SRP19.

It is found in the cytoplasm. It catalyses the reaction GTP + H2O = GDP + phosphate + H(+). In terms of biological role, involved in targeting and insertion of nascent membrane proteins into the cytoplasmic membrane. Binds to the hydrophobic signal sequence of the ribosome-nascent chain (RNC) as it emerges from the ribosomes. The SRP-RNC complex is then targeted to the cytoplasmic membrane where it interacts with the SRP receptor FtsY. The chain is Signal recognition particle 54 kDa protein from Pyrobaculum calidifontis (strain DSM 21063 / JCM 11548 / VA1).